The chain runs to 360 residues: Peptide chain release factor 1 (360 aa).

Gln236 carries the post-translational modification N5-methylglutamine. Residues 288 to 308 are disordered; the sequence is QDEQDAERKSTIGTGDRSERI. A compositionally biased stretch (basic and acidic residues) spans 293 to 308; the sequence is AERKSTIGTGDRSERI.

This sequence belongs to the prokaryotic/mitochondrial release factor family. Methylated by PrmC. Methylation increases the termination efficiency of RF1.

Its subcellular location is the cytoplasm. In terms of biological role, peptide chain release factor 1 directs the termination of translation in response to the peptide chain termination codons UAG and UAA. In Streptococcus equi subsp. zooepidemicus (strain H70), this protein is Peptide chain release factor 1.